The sequence spans 135 residues: HTH-type transcriptional regulator CueR (135 aa).

The 69-residue stretch at 1–69 (MNISDVAKIT…LEESGELVNL (69 aa)) folds into the HTH merR-type domain. The segment at residues 4 to 23 (SDVAKITGLTSKAIRFYEEK) is a DNA-binding region (H-T-H motif). Residues Cys112 and Cys120 each coordinate Cu(+).

Homodimer.

It localises to the cytoplasm. In terms of biological role, regulates the transcription of the copA and cueO genes. It detects cytoplasmic copper stress and activates transcription in response to increasing copper concentrations. The protein is HTH-type transcriptional regulator CueR (cueR) of Escherichia coli O157:H7.